The following is a 249-amino-acid chain: Isoprenyl transferase (249 aa).

The active site involves aspartate 25. Aspartate 25 contributes to the Mg(2+) binding site. Substrate contacts are provided by residues 26–29 (GNGR), tryptophan 30, arginine 38, histidine 42, and 70–72 (STE). The active-site Proton acceptor is the asparagine 73. Residues tryptophan 74, arginine 76, arginine 197, and 203–205 (RLS) contribute to the substrate site. Glutamate 216 lines the Mg(2+) pocket.

Belongs to the UPP synthase family. In terms of assembly, homodimer. Mg(2+) is required as a cofactor.

Its function is as follows. Catalyzes the condensation of isopentenyl diphosphate (IPP) with allylic pyrophosphates generating different type of terpenoids. This Streptococcus mutans serotype c (strain ATCC 700610 / UA159) protein is Isoprenyl transferase.